The sequence spans 341 residues: Ribosomal RNA small subunit methyltransferase C (341 aa).

It belongs to the methyltransferase superfamily. RsmC family. As to quaternary structure, monomer.

The protein resides in the cytoplasm. It catalyses the reaction guanosine(1207) in 16S rRNA + S-adenosyl-L-methionine = N(2)-methylguanosine(1207) in 16S rRNA + S-adenosyl-L-homocysteine + H(+). Its function is as follows. Specifically methylates the guanine in position 1207 of 16S rRNA in the 30S particle. The polypeptide is Ribosomal RNA small subunit methyltransferase C (Shewanella pealeana (strain ATCC 700345 / ANG-SQ1)).